A 358-amino-acid polypeptide reads, in one-letter code: Naringenin,2-oxoglutarate 3-dioxygenase (358 aa).

A Fe2OG dioxygenase domain is found at 190–294 (CVDMDQKIVV…RLSIATFQNP (105 aa)). The Fe cation site is built by His217, Asp219, and His275. Arg285 is a binding site for 2-oxoglutarate.

The protein belongs to the iron/ascorbate-dependent oxidoreductase family. In terms of assembly, interacts with Dihydroflavonol-4-reductase (TT3), chalcone synthase (TT4) and chalcone isomerase (TT5) to form a flavonoid enzyme complex. Fe(2+) is required as a cofactor. It depends on L-ascorbate as a cofactor.

The catalysed reaction is a (2S)-flavan-4-one + 2-oxoglutarate + O2 = a (2R,3R)-dihydroflavonol + succinate + CO2. Its pathway is secondary metabolite biosynthesis; flavonoid biosynthesis. Functionally, catalyzes the 3-beta-hydroxylation of 2S-flavanones to 2R,3R-dihydroflavonols which are intermediates in the biosynthesis of flavonols, anthocyanidins, catechins and proanthocyanidins in plants. The sequence is that of Naringenin,2-oxoglutarate 3-dioxygenase (F3H) from Arabidopsis thaliana (Mouse-ear cress).